The chain runs to 493 residues: Transcript termination protein OPG145 (493 aa).

Residues 100–256 (MIESKRPLYI…NSIINIAKLS (157 aa)) form the Helicase ATP-binding domain. 113-120 (LACGFGKT) serves as a coordination point for ATP. The DESH box motif lies at 206 to 209 (DESH). The 148-residue stretch at 309 to 456 (ILDTLVEEFK…IISLSVDKLG (148 aa)) folds into the Helicase C-terminal domain.

Belongs to the helicase family. Poxviruses subfamily. Interacts with OPG087. Might be part of a transcription complex composed at least of OPG087, OPG110, and OPG145.

The protein localises to the virion. Functionally, DNA helicase which seems to act as a postreplicative transcription termination factor. Involved in ATP-dependent release of nascent RNA. Forms a stable complex with single-stranded DNA, and to a lesser extent RNA. The protein is Transcript termination protein OPG145 (OPG145) of Homo sapiens (Human).